The chain runs to 210 residues: Somatotropin (210 aa).

The first 22 residues, 1–22 (MGQVFLLMPVLLVSCFLSQGAA), serve as a signal peptide directing secretion. His-38 provides a ligand contact to Zn(2+). The cysteines at positions 71 and 183 are disulfide-linked. Zn(2+) is bound at residue Glu-192. Cys-200 and Cys-208 are oxidised to a cystine.

It belongs to the somatotropin/prolactin family.

It is found in the secreted. Functionally, growth hormone plays an important role in growth control and is involved in the regulation of several anabolic processes. Implicated as an osmoregulatory substance important for seawater adaptation. In Oncorhynchus keta (Chum salmon), this protein is Somatotropin (gh).